We begin with the raw amino-acid sequence, 145 residues long: Putative phosphatidylglycerol/phosphatidylinositol transfer protein DDB_G0282179 (145 aa).

Residues 1–20 (MIKTILLLLINFMLILIVNG) form the signal peptide. An N-linked (GlcNAc...) asparagine glycan is attached at N134.

The protein belongs to the NPC2 family. As to quaternary structure, monomer.

Catalyzes the intermembrane transfer of phosphatidylglycerol and phosphatidylinositol. In Dictyostelium discoideum (Social amoeba), this protein is Putative phosphatidylglycerol/phosphatidylinositol transfer protein DDB_G0282179.